The following is a 490-amino-acid chain: Thyroid hormone receptor alpha (490 aa).

The interval 1-32 is disordered; it reads MEQKPSKVECGSDPEENSARSPDGKRKRKNGQ. The interval 1–52 is modulating; that stretch reads MEQKPSKVECGSDPEENSARSPDGKRKRKNGQCSLKTSMSGYIPSYLDKDEQ. Zn(2+)-binding residues include Cys53, Cys56, Cys70, Cys73, Cys91, Cys97, Cys107, and Cys110. 2 consecutive NR C4-type zinc fingers follow at residues 53–73 and 91–115; these read CVVCGDKATGYHYRCITCEGC and CKYDSCCVIDKITRNQCQLCRFKKC. A DNA-binding region (nuclear receptor) is located at residues 53-127; it reads CVVCGDKATG…VGMAMDLVLD (75 aa). An NR LBD domain is found at 163–407; sequence EEWDLIHIAT…EGQQLLGMHV (245 aa). 3,3',5-triiodo-L-thyronine is bound by residues Arg228 and Ser277. Positions 457–490 are disordered; sequence AVCGEDDSSEADSPSSSEEEPEVCEDLAGNAASP.

This sequence belongs to the nuclear hormone receptor family. NR1 subfamily. Binds DNA as a dimer; homodimer and heterodimer with RXRB. Interacts with NCOA3 and NCOA6 coactivators, leading to a strong increase of transcription of target genes. Probably interacts with SFPQ. Interacts with C1D. Interacts with AKAP13. Interacts with TP53INP2. Interacts with PER2. Isoform alpha-2 and isoform alpha-1 interact with TACC1, but the interaction with alpha-1 is weaker. The interaction with isoform alpha-1, but not alpha-2, is decreased in the presence of thyroid hormone T3.

The protein localises to the nucleus. Its subcellular location is the cytoplasm. Its function is as follows. Nuclear hormone receptor that can act as a repressor or activator of transcription. High affinity receptor for thyroid hormones, including triiodothyronine and thyroxine. In terms of biological role, does not bind thyroid hormone and functions as a weak dominant negative inhibitor of thyroid hormone action. This Homo sapiens (Human) protein is Thyroid hormone receptor alpha (THRA).